The sequence spans 545 residues: CTP synthase (545 aa).

The segment at 1-266 (MTTNYIFVTG…DDYICKRFSL (266 aa)) is amidoligase domain. Ser-14 is a CTP binding site. Ser-14 is a UTP binding site. ATP-binding positions include 15 to 20 (SLGKGI) and Asp-72. Mg(2+) is bound by residues Asp-72 and Glu-140. CTP contacts are provided by residues 147 to 149 (DIE), 187 to 192 (KTKPTQ), and Lys-223. UTP contacts are provided by residues 187–192 (KTKPTQ) and Lys-223. 239 to 241 (KDV) is a binding site for ATP. The region spanning 291 to 542 (TIGMVGKYIE…VKAASEYQKR (252 aa)) is the Glutamine amidotransferase type-1 domain. Gly-352 provides a ligand contact to L-glutamine. Catalysis depends on Cys-379, which acts as the Nucleophile; for glutamine hydrolysis. L-glutamine contacts are provided by residues 380–383 (LGMQ), Glu-403, and Arg-470. Active-site residues include His-515 and Glu-517.

The protein belongs to the CTP synthase family. In terms of assembly, homotetramer.

The enzyme catalyses UTP + L-glutamine + ATP + H2O = CTP + L-glutamate + ADP + phosphate + 2 H(+). The catalysed reaction is L-glutamine + H2O = L-glutamate + NH4(+). It catalyses the reaction UTP + NH4(+) + ATP = CTP + ADP + phosphate + 2 H(+). The protein operates within pyrimidine metabolism; CTP biosynthesis via de novo pathway; CTP from UDP: step 2/2. Allosterically activated by GTP, when glutamine is the substrate; GTP has no effect on the reaction when ammonia is the substrate. The allosteric effector GTP functions by stabilizing the protein conformation that binds the tetrahedral intermediate(s) formed during glutamine hydrolysis. Inhibited by the product CTP, via allosteric rather than competitive inhibition. Its function is as follows. Catalyzes the ATP-dependent amination of UTP to CTP with either L-glutamine or ammonia as the source of nitrogen. Regulates intracellular CTP levels through interactions with the four ribonucleotide triphosphates. This is CTP synthase from Citrobacter koseri (strain ATCC BAA-895 / CDC 4225-83 / SGSC4696).